Reading from the N-terminus, the 259-residue chain is uncharacterized protein (259 aa).

Residues 19-249 (TKIPGAKYVI…DEVINTIKKK (231 aa)) form the Radical SAM core domain. The [4Fe-4S] cluster site is built by cysteine 34, cysteine 38, and cysteine 41.

The cofactor is [4Fe-4S] cluster.

This is an uncharacterized protein from Methanocaldococcus jannaschii (strain ATCC 43067 / DSM 2661 / JAL-1 / JCM 10045 / NBRC 100440) (Methanococcus jannaschii).